Consider the following 488-residue polypeptide: Glutamyl-tRNA(Gln) amidotransferase subunit A (488 aa).

Active-site charge relay system residues include Lys-77 and Ser-152. Ser-176 serves as the catalytic Acyl-ester intermediate.

Belongs to the amidase family. GatA subfamily. In terms of assembly, heterotrimer of A, B and C subunits.

It carries out the reaction L-glutamyl-tRNA(Gln) + L-glutamine + ATP + H2O = L-glutaminyl-tRNA(Gln) + L-glutamate + ADP + phosphate + H(+). Its function is as follows. Allows the formation of correctly charged Gln-tRNA(Gln) through the transamidation of misacylated Glu-tRNA(Gln) in organisms which lack glutaminyl-tRNA synthetase. The reaction takes place in the presence of glutamine and ATP through an activated gamma-phospho-Glu-tRNA(Gln). This chain is Glutamyl-tRNA(Gln) amidotransferase subunit A, found in Streptococcus equi subsp. zooepidemicus (strain MGCS10565).